Consider the following 425-residue polypeptide: tRNA(Ile)-lysidine synthase (425 aa).

Residue 37-42 (SGGKDS) participates in ATP binding.

Belongs to the tRNA(Ile)-lysidine synthase family.

The protein localises to the cytoplasm. It catalyses the reaction cytidine(34) in tRNA(Ile2) + L-lysine + ATP = lysidine(34) in tRNA(Ile2) + AMP + diphosphate + H(+). Ligates lysine onto the cytidine present at position 34 of the AUA codon-specific tRNA(Ile) that contains the anticodon CAU, in an ATP-dependent manner. Cytidine is converted to lysidine, thus changing the amino acid specificity of the tRNA from methionine to isoleucine. This Leptospira borgpetersenii serovar Hardjo-bovis (strain JB197) protein is tRNA(Ile)-lysidine synthase.